Here is a 112-residue protein sequence, read N- to C-terminus: Protein F-112 (112 aa).

Functionally, essential for virus function. The sequence is that of Protein F-112 from Saccharolobus solfataricus (Sulfolobus solfataricus).